Consider the following 145-residue polypeptide: Protein SprT-like (145 aa).

The 137-residue stretch at 4–140 folds into the SprT-like domain; sequence TNYVQEVSLA…VCGNCHGKLI (137 aa). His-64 is a Zn(2+) binding site. Residue Glu-65 is part of the active site. A Zn(2+)-binding site is contributed by His-68.

This sequence belongs to the SprT family. The cofactor is Zn(2+).

The protein resides in the cytoplasm. The sequence is that of Protein SprT-like from Streptococcus pyogenes serotype M18 (strain MGAS8232).